Here is a 76-residue protein sequence, read N- to C-terminus: ATP synthase subunit c (76 aa).

The next 2 helical transmembrane spans lie at 7-27 (VATALAVGLGAIGPGVGIGII) and 50-70 (FIGIAFTEALAIFGLVIAFLI).

It belongs to the ATPase C chain family. As to quaternary structure, F-type ATPases have 2 components, F(1) - the catalytic core - and F(0) - the membrane proton channel. F(1) has five subunits: alpha(3), beta(3), gamma(1), delta(1), epsilon(1). F(0) has four main subunits: a(1), b(1), b'(1) and c(10-14). The alpha and beta chains form an alternating ring which encloses part of the gamma chain. F(1) is attached to F(0) by a central stalk formed by the gamma and epsilon chains, while a peripheral stalk is formed by the delta, b and b' chains.

The protein resides in the cell membrane. In terms of biological role, f(1)F(0) ATP synthase produces ATP from ADP in the presence of a proton or sodium gradient. F-type ATPases consist of two structural domains, F(1) containing the extramembraneous catalytic core and F(0) containing the membrane proton channel, linked together by a central stalk and a peripheral stalk. During catalysis, ATP synthesis in the catalytic domain of F(1) is coupled via a rotary mechanism of the central stalk subunits to proton translocation. Functionally, key component of the F(0) channel; it plays a direct role in translocation across the membrane. A homomeric c-ring of between 10-14 subunits forms the central stalk rotor element with the F(1) delta and epsilon subunits. This chain is ATP synthase subunit c, found in Chloroflexus aurantiacus (strain ATCC 29366 / DSM 635 / J-10-fl).